The following is a 393-amino-acid chain: Pyrimidine monooxygenase RutA (393 aa).

FMN is bound by residues 79–80 (IK), Asn-145, Glu-154, 170–171 (RY), and Ser-220.

The protein belongs to the NtaA/SnaA/DszA monooxygenase family. RutA subfamily.

It catalyses the reaction uracil + FMNH2 + NADH + O2 = (Z)-3-ureidoacrylate + FMN + NAD(+) + H2O + H(+). The catalysed reaction is thymine + FMNH2 + NADH + O2 = (Z)-2-methylureidoacrylate + FMN + NAD(+) + H2O + H(+). Functionally, catalyzes the pyrimidine ring opening between N-3 and C-4 by an unusual flavin hydroperoxide-catalyzed mechanism, adding oxygen atoms in the process to yield ureidoacrylate peracid, that immediately reacts with FMN forming ureidoacrylate and FMN-N(5)-oxide. The FMN-N(5)-oxide reacts spontaneously with NADH to produce FMN. Requires the flavin reductase RutF to regenerate FMN in vivo. The protein is Pyrimidine monooxygenase RutA of Escherichia coli O18:K1:H7 (strain IHE3034 / ExPEC).